Reading from the N-terminus, the 297-residue chain is ClpXP adapter protein SpxH (297 aa).

It belongs to the SpxH family. In terms of assembly, interacts with Spx.

It localises to the cytoplasm. Its function is as follows. Adapter protein required for efficient degradation of Spx by ClpXP under non-stress conditions. Interaction with Spx stabilizes Spx and exposes the C-terminus of Spx for recognition and proteolysis by ClpXP. This is ClpXP adapter protein SpxH from Bacillus cereus (strain ATCC 10987 / NRS 248).